Reading from the N-terminus, the 195-residue chain is MSGLVPIVVEQTNRGERAYDIYSRLLKDRIIFIGGPIDDHIANLVIAQFLFLEAEDPEKDIHLYINSPGGVVTAGLAIYDTMQYIKPAVSTICLGQAASMGSFLLAAGAPGKRYALPMARIMIHQPLGGVQGQATDIDIHAKEILRMKDLLNDRLAHHTGQPLEQITRDTERDYFMSAEEAKKYGLIDEVMPYRK.

Ser99 acts as the Nucleophile in catalysis. His124 is an active-site residue.

It belongs to the peptidase S14 family. As to quaternary structure, fourteen ClpP subunits assemble into 2 heptameric rings which stack back to back to give a disk-like structure with a central cavity, resembling the structure of eukaryotic proteasomes.

Its subcellular location is the cytoplasm. The catalysed reaction is Hydrolysis of proteins to small peptides in the presence of ATP and magnesium. alpha-casein is the usual test substrate. In the absence of ATP, only oligopeptides shorter than five residues are hydrolyzed (such as succinyl-Leu-Tyr-|-NHMec, and Leu-Tyr-Leu-|-Tyr-Trp, in which cleavage of the -Tyr-|-Leu- and -Tyr-|-Trp bonds also occurs).. Its function is as follows. Cleaves peptides in various proteins in a process that requires ATP hydrolysis. Has a chymotrypsin-like activity. Plays a major role in the degradation of misfolded proteins. The sequence is that of ATP-dependent Clp protease proteolytic subunit from Desulforamulus reducens (strain ATCC BAA-1160 / DSM 100696 / MI-1) (Desulfotomaculum reducens).